We begin with the raw amino-acid sequence, 467 residues long: UBX domain-containing protein 7 (467 aa).

Position 2 is an N-acetylalanine (Ala2). Residues 2–54 (AAHGGSAASSALKGLIQQFTAITGASESVGKHMLEACNNNLEMAVTMFLDGGG) enclose the UBA domain. The tract at residues 57 to 77 (EEPSTSSASVSTVRPHTEEEV) is disordered. Polar residues predominate over residues 59 to 70 (PSTSSASVSTVR). Residues Lys84 and Lys112 each participate in a glycyl lysine isopeptide (Lys-Gly) (interchain with G-Cter in SUMO2) cross-link. The segment at 240-260 (GQLDGLSSSPPKKCARSESLI) is disordered. A phosphoserine mark is found at Ser256, Ser258, Ser263, and Ser266. The stretch at 263–282 (SEDSQLEAAIRASLQETHFD) is one ubiquitin-interacting motif (UIM) repeat. Residues 281–364 (FDSAQAKQDS…TATNHQGLPS (84 aa)) form a disordered region. The segment covering 330-344 (HKDLGHRKEENRRPL) has biased composition (basic and acidic residues). At Ser373 the chain carries Phosphoserine. The region spanning 386-463 (VNGPKAQLML…GLCPQETVFV (78 aa)) is the UBX domain.

Interacts with neddylated CUL2, ubiquitinated HIF1A, and VCP/p97.

It is found in the nucleus. Ubiquitin-binding adapter that links a subset of NEDD8-associated cullin ring ligases (CRLs) to the segregase VCP/p97, to regulate turnover of their ubiquitination substrates. The polypeptide is UBX domain-containing protein 7 (Ubxn7) (Mus musculus (Mouse)).